The primary structure comprises 261 residues: MADLFWQTSDEGSRDLVLLHGWGLNAEVWRSIEMRCAPHFRLHLVDLPGYGRSQKYGPMNLADMADEVWRYAPENALWLGWSLGGLVASRIALDHQDKVAGLITVASSPHFSAESDWPGIKPEVLHDFEHQLSKDFQRTVERFLALQTLGTDSARQDARLLKSVVLAQPMPSVEVLHVGLEILRTEDLRQPLAELAIPFLRIYGYLDGLVPRKIINILDEKWPRSVSAMMRHAAHAPFISHPDEFVGLLTEFASREVLQGR.

Residues 16–241 (LVLLHGWGLN…HAAHAPFISH (226 aa)) form the AB hydrolase-1 domain. Residues W22, 82–83 (SL), and 143–147 (FLALQ) contribute to the substrate site. Catalysis depends on S82, which acts as the Nucleophile. Residues D207 and H235 contribute to the active site. H235 is a binding site for substrate.

This sequence belongs to the AB hydrolase superfamily. Carboxylesterase BioH family. In terms of assembly, monomer.

It is found in the cytoplasm. It carries out the reaction 6-carboxyhexanoyl-[ACP] methyl ester + H2O = 6-carboxyhexanoyl-[ACP] + methanol + H(+). Its pathway is cofactor biosynthesis; biotin biosynthesis. Functionally, the physiological role of BioH is to remove the methyl group introduced by BioC when the pimeloyl moiety is complete. It allows to synthesize pimeloyl-ACP via the fatty acid synthetic pathway through the hydrolysis of the ester bonds of pimeloyl-ACP esters. The chain is Pimeloyl-[acyl-carrier protein] methyl ester esterase from Photorhabdus laumondii subsp. laumondii (strain DSM 15139 / CIP 105565 / TT01) (Photorhabdus luminescens subsp. laumondii).